We begin with the raw amino-acid sequence, 290 residues long: Dihydroorotate dehydrogenase B (NAD(+)), catalytic subunit (290 aa).

Residues S17 and 42–43 contribute to the FMN site; that span reads KT. Substrate contacts are provided by residues K42, 67–71, and N117; that span reads NAIGL. Position 117 (N117) interacts with FMN. S120 functions as the Nucleophile in the catalytic mechanism. Positions 152 and 177 each coordinate FMN. 178-179 contacts substrate; the sequence is NT. FMN contacts are provided by residues G203, 229–230, and 251–252; these read GG and GT.

The protein belongs to the dihydroorotate dehydrogenase family. Type 1 subfamily. In terms of assembly, heterotetramer of 2 PyrK and 2 PyrD type B subunits. FMN is required as a cofactor.

Its subcellular location is the cytoplasm. It carries out the reaction (S)-dihydroorotate + NAD(+) = orotate + NADH + H(+). The protein operates within pyrimidine metabolism; UMP biosynthesis via de novo pathway; orotate from (S)-dihydroorotate (NAD(+) route): step 1/1. Its function is as follows. Catalyzes the conversion of dihydroorotate to orotate with NAD(+) as electron acceptor. The sequence is that of Dihydroorotate dehydrogenase B (NAD(+)), catalytic subunit (pyrD) from Saccharolobus solfataricus (strain ATCC 35092 / DSM 1617 / JCM 11322 / P2) (Sulfolobus solfataricus).